The sequence spans 47 residues: PhoP/PhoQ regulator MgrB (47 aa).

The helical transmembrane segment at 6–26 (WVVLVVVVLACLLLWAQVFNM) threads the bilayer.

It belongs to the MgrB family. In terms of assembly, may form homooligomers. Probably interacts with the periplasmic domain of PhoQ.

The protein resides in the cell inner membrane. In terms of biological role, phoP-regulated transcription is redox-sensitive, being activated when the periplasm becomes more reducing. MgrB acts between DsbA/DsbB and PhoP/PhoQ in this pathway. Represses PhoP/PhoQ signaling, possibly by binding to the periplasmic domain of PhoQ, altering its activity and that of downstream effector PhoP. This Escherichia coli O157:H7 protein is PhoP/PhoQ regulator MgrB.